An 816-amino-acid polypeptide reads, in one-letter code: H(+)/Cl(-) exchange transporter 5 (816 aa).

Topologically, residues 1 to 124 are cytoplasmic; sequence MAMWQGAMDN…WALIHSVSDA (124 aa). The next 2 helical transmembrane spans lie at 125–162 and 208–231; these read FSGWLLMLLIGLLSGSLAGLIDISAHWMTDLKEGICTG and VNYFMYVLWALLFAFLAVSLVKAF. The short motif at 237-241 is the Selectivity filter part_1 element; the sequence is GSGIP. Serine 238 contributes to the chloride binding site. An intramembrane region (helical) is located at residues 240–247; sequence IPEIKTIL. The next 2 membrane-spanning stretches (helical) occupy residues 256–275 and 281–300; these read LGKWTLVIKTITLVLAVSSG and EGPLVHVACCCGNILCHCFN. Residues 279–283 carry the Selectivity filter part_2 motif; the sequence is GKEGP. Intramembrane regions (helical) lie at residues 312-324 and 328-336; these read VLSAAAAAGVSVA and PIGGVLFSL. 5 helical membrane-spanning segments follow: residues 348-366, 389-414, 422-442, 498-518, and 523-542; these read LWRSFFAALVAAFTLRSIN, LVPFIVLGIFGGLWGALFIRTNIAWC, LGKYPVVEVLIVTAITAILAF, MWQLALTLILKIVITIFTFGM, and GLFIPSMAVGAIAGRLLGVG. Positions 523–527 match the Selectivity filter part_3 motif; sequence GLFIP. Residue phenylalanine 525 participates in chloride binding. An intramembrane region (helical) is located at residues 570–584; sequence GLYAMVGAAACLGGV. Residues 585-587 constitute an intramembrane region (note=Loop between two helices); it reads TRM. The helical intramembrane region spans 588–599; sequence TVSLVVIMFELT. An intramembrane region (note=Loop between two helices) is located at residues 600-604; sequence GGLEY. A helical transmembrane segment spans residues 605–622; sequence IVPLMAAAMTSKWVADAL. At 623–816 the chain is on the cytoplasmic side; sequence GREGIYDAHI…NQDPDSILFN (194 aa). Residue tyrosine 628 participates in chloride binding. 2 CBS domains span residues 656–720 and 752–812; these read MKPR…ARKK and ILDL…DPDS. Residues threonine 666, 687-689, and 794-797 each bind ATP; these read YSG and TKKD.

It belongs to the chloride channel (TC 2.A.49) family. ClC-5/CLCN5 subfamily. In terms of assembly, interacts with NEDD4 and NEDD4L. Post-translationally, ubiquitinated by NEDD4L in the presence of albumin; which promotes endocytosis and proteasomal degradation. In terms of tissue distribution, kidney specific.

It is found in the golgi apparatus membrane. Its subcellular location is the endosome membrane. The protein resides in the cell membrane. It carries out the reaction 2 chloride(in) + H(+)(out) = 2 chloride(out) + H(+)(in). In terms of biological role, proton-coupled chloride transporter. Functions as antiport system and exchanges chloride ions against protons. Important for normal acidification of the endosome lumen. May play an important role in renal tubular function. The CLC channel family contains both chloride channels and proton-coupled anion transporters that exchange chloride or another anion for protons. The absence of conserved gating glutamate residues is typical for family members that function as channels. This chain is H(+)/Cl(-) exchange transporter 5 (Clcn5), found in Mus musculus (Mouse).